A 1773-amino-acid polypeptide reads, in one-letter code: Zinc finger CCCH domain-containing protein 19 (1773 aa).

The tract at residues 145-166 (SGDRLEENKEVSMEEEPSSHEL) is disordered. Basic and acidic residues predominate over residues 147 to 156 (DRLEENKEVS). Positions 196–218 (GEEIESDLESKKEKVDVIEEETT) form a coiled coil. 3 disordered regions span residues 270–290 (IGEG…DVTE), 361–409 (DVDK…AGQT), and 434–591 (ISEM…KTVK). 2 stretches are compositionally biased toward basic and acidic residues: residues 273 to 286 (GAKD…KEGV) and 361 to 378 (DVDK…HVPE). Residues 403–437 (AEEAGQTVDLEEIREENQELSKELAQVDETKISEM) are a coiled coil. Composition is skewed to basic and acidic residues over residues 444 to 455 (MIKDEDQEKDDN) and 497 to 513 (KVDR…TDTR). Acidic residues-rich tracts occupy residues 514-529 (IEDE…TDVA) and 551-572 (EEMT…EVEE). The segment covering 578–588 (GGKRKRGRNTK) has biased composition (basic residues). The short motif at 581 to 588 (RKRGRNTK) is the Nuclear localization signal 1 element. The PHD-type zinc finger occupies 599-665 (EDVCFMCFDG…TYLCYTCMFS (67 aa)). The segment covering 741–751 (AKRPLKGHETN) has biased composition (basic and acidic residues). The disordered stretch occupies residues 741–797 (AKRPLKGHETNASKQGTASETDYVTDGGSDSDSSPKKRKTRSRSKSGSAEKILSSGD). The span at 752 to 762 (ASKQGTASETD) shows a compositional bias: polar residues. Residues 801–884 (SDETMEWASK…LNLLDSHFLK (84 aa)) enclose the SWIB/MDM2 domain. Residues 903 to 919 (PNHVDVDENLDHPVKSG) show a composition bias toward basic and acidic residues. The disordered stretch occupies residues 903–935 (PNHVDVDENLDHPVKSGKDKKRKTRKKNVRKGR). A compositionally biased stretch (basic residues) spans 920–935 (KDKKRKTRKKNVRKGR). The short motif at 921–928 (DKKRKTRK) is the Nuclear localization signal 2 element. The region spanning 944–1076 (AVDMHNINLI…KAIALQEVRV (133 aa)) is the Plus3 domain. A compositionally biased stretch (basic and acidic residues) spans 1139–1152 (EEIPEIHADPKMDP). Positions 1139–1274 (EEIPEIHADP…PETPARSSRA (136 aa)) are disordered. The span at 1153–1163 (DCESEDEDEKE) shows a compositional bias: acidic residues. The span at 1193 to 1212 (FSSNESWTGTSNYSNTSANR) shows a compositional bias: polar residues. Ser-1281 carries the post-translational modification Phosphoserine. In terms of domain architecture, GYF spans 1307–1361 (EKIWHYKDPSGKVQGPFSMAQLRKWNNTGYFPAKLEIWKANESPLDSVLLTDALA). Composition is skewed to polar residues over residues 1409–1433 (RNSQ…TTPT), 1441–1469 (SRWS…QSQT), 1499–1509 (VSVNHSATLHS), and 1518–1528 (SWGSMQTDHGG). 3 disordered regions span residues 1409–1469 (RNSQ…QSQT), 1485–1605 (QPQT…SWGQ), and 1649–1746 (GQTQ…QQNN). The span at 1529–1555 (SNTPSSQNNSTSYGTPSPSVLPSQSQP) shows a compositional bias: low complexity. The segment covering 1569-1579 (SQPNAQAQAQW) has biased composition (polar residues). 2 stretches are compositionally biased toward low complexity: residues 1585–1602 (NNNQ…QNSS) and 1666–1677 (QSQSQSQVQAQA). Polar residues predominate over residues 1678–1708 (GTTGSGWMQPGQGIQSGNSNQNWGTQNQTAI). Residues 1722–1735 (GNQQQSQNGDSGYG) are compositionally biased toward low complexity. The span at 1737–1746 (NRQSGGQQNN) shows a compositional bias: polar residues. The segment at 1747–1773 (FKGQRVCKFFRENGHCRKGASCNYLHN) adopts a C3H1-type zinc-finger fold.

As to quaternary structure, interacts with unmethylated histone H3 and AGO2. The interaction with AGO2 in required to direct DNA methylation and silencing. As to expression, expressed in seedlings, mostly in the vasculature and shoot apices of young seedlings.

The protein localises to the nucleus. Functionally, plays a central role in integrating RNA silencing and chromatin signals in 21 nt siRNA-dependent DNA methylation on cytosine pathway leading to transcriptional gene silencing of specific sequences. Involved in a chromatin-based RNA silencing pathway that encompasses both post-transcriptional gene silencing (PTGS) (e.g. RDR1, RDR6 and AGO2) and transcriptional gene silencing (TGS) (e.g. siRNA-dependent DNA methylation and histone H3) components. Mediates siRNA accumulation at specific chromatin loci. Binds H3K4me0 through its PHD to enforce low levels of H3K4 methylation and gene silencing at a subset of genomic loci. The protein is Zinc finger CCCH domain-containing protein 19 (NERD) of Arabidopsis thaliana (Mouse-ear cress).